The sequence spans 425 residues: Enolase (425 aa).

Gln163 is a binding site for (2R)-2-phosphoglycerate. Glu205 (proton donor) is an active-site residue. Mg(2+) contacts are provided by Asp242, Glu285, and Asp312. The (2R)-2-phosphoglycerate site is built by Lys337, Arg366, Ser367, and Lys388. The Proton acceptor role is filled by Lys337.

Belongs to the enolase family. Mg(2+) is required as a cofactor.

The protein resides in the cytoplasm. It localises to the secreted. Its subcellular location is the cell surface. It catalyses the reaction (2R)-2-phosphoglycerate = phosphoenolpyruvate + H2O. Its pathway is carbohydrate degradation; glycolysis; pyruvate from D-glyceraldehyde 3-phosphate: step 4/5. Functionally, catalyzes the reversible conversion of 2-phosphoglycerate (2-PG) into phosphoenolpyruvate (PEP). It is essential for the degradation of carbohydrates via glycolysis. The sequence is that of Enolase from Cereibacter sphaeroides (strain ATCC 17029 / ATH 2.4.9) (Rhodobacter sphaeroides).